Reading from the N-terminus, the 95-residue chain is uncharacterized protein (95 aa).

Positions 2 to 92 (VREAAMLHIK…YTPFPTVEHF (91 aa)) constitute an ABM domain.

This is an uncharacterized protein from Bacillus subtilis (strain 168).